We begin with the raw amino-acid sequence, 996 residues long: KK-1 biosynthesis cluster protein D (996 aa).

Disordered regions lie at residues 307-333, 425-449, 489-556, and 571-602; these read HDTD…PELD, EQDN…ARDL, AGVA…ALRA, and STHS…SLHS. Polar residues-rich tracts occupy residues 318-329 and 428-439; these read PIRSNKLSQSKQ and NQTNEEGTGEVQ. Basic and acidic residues-rich tracts occupy residues 440–449 and 500–527; these read SQRDRRARDL and RAAE…DKAA. Polar residues predominate over residues 572–590; the sequence is THSIHQRASVNTTAPTVAR.

It functions in the pathway secondary metabolite biosynthesis. Its function is as follows. Part of the gene cluster that mediates the biosynthesis of KK-1, a novel cyclic depsipeptide with 10 residues which is a promising active compound with high activity against many plant pathogens, especially Botrytis cinerea. The role of kk1D in KK-1 biosynthesis has still to be determined. The nonribosomal peptide synthetase (NRPS) kk1B catalyzes the elongation and cyclization of the decapeptide chain composed of 1 D-lactic acid residue (D-Lac), 1 pipecolic acid residue (Pip), 1 aspartic acid residue (Asp), 1 isoleucine residue (Ile), 1 glycine residue (Gly), 1 tyrosine residue (Tyr) and 4 valine residues (Val). The Asp, Ile and 3 Val residues are N-methylated by the 5 methyltransferase domains from the NRPS (found in modules 3, 5, 6, 7 and 9), whereas the Tyr residue is O-methylated by the cluster encoded O-methyltransferase kk1A. The thioesterase kk1J is likely to be involved in the corrective mechanism of peptide chain synthesis. The D-lactate dehydrogenase kk1H is involved in the synthesis of D-lactic acid from pyruvic acid, which is recognized by the A domain of the first kk1B module. The pyrroline-5-carboxylate reductase kk1I is involved in the synthesis of the L-pipecolic acid residue of KK-1 from delta-1-pyrroline-5-carboxylate (P5C), a metabolic intermediate of lysine. It is still unclear how kk1C and kk1D are involved in the production of KK-1. In Curvularia clavata, this protein is KK-1 biosynthesis cluster protein D.